The following is a 355-amino-acid chain: tRNA N6-adenosine threonylcarbamoyltransferase (355 aa).

The Fe cation site is built by histidine 110 and histidine 114. Substrate-binding positions include 132 to 136 (LVSGG), aspartate 165, glycine 178, aspartate 182, and asparagine 288. Residue aspartate 316 coordinates Fe cation.

Belongs to the KAE1 / TsaD family. Fe(2+) is required as a cofactor.

Its subcellular location is the cytoplasm. It catalyses the reaction L-threonylcarbamoyladenylate + adenosine(37) in tRNA = N(6)-L-threonylcarbamoyladenosine(37) in tRNA + AMP + H(+). Required for the formation of a threonylcarbamoyl group on adenosine at position 37 (t(6)A37) in tRNAs that read codons beginning with adenine. Is involved in the transfer of the threonylcarbamoyl moiety of threonylcarbamoyl-AMP (TC-AMP) to the N6 group of A37, together with TsaE and TsaB. TsaD likely plays a direct catalytic role in this reaction. The sequence is that of tRNA N6-adenosine threonylcarbamoyltransferase from Lawsonia intracellularis (strain PHE/MN1-00).